A 108-amino-acid polypeptide reads, in one-letter code: Protein FMC1 homolog (108 aa).

Belongs to the FMC1 family.

This Caenorhabditis elegans protein is Protein FMC1 homolog.